Reading from the N-terminus, the 410-residue chain is Multifunctional CCA protein (410 aa).

G8 and R11 together coordinate ATP. CTP-binding residues include G8 and R11. Mg(2+)-binding residues include D21 and D23. ATP-binding residues include R91, R137, and R140. Positions 91, 137, and 140 each coordinate CTP. Residues 228 to 329 (TGVHVLSVLQ…LELLQSFDVY (102 aa)) form the HD domain.

Belongs to the tRNA nucleotidyltransferase/poly(A) polymerase family. Bacterial CCA-adding enzyme type 1 subfamily. As to quaternary structure, monomer. Can also form homodimers and oligomers. Mg(2+) serves as cofactor. It depends on Ni(2+) as a cofactor.

It carries out the reaction a tRNA precursor + 2 CTP + ATP = a tRNA with a 3' CCA end + 3 diphosphate. The catalysed reaction is a tRNA with a 3' CCA end + 2 CTP + ATP = a tRNA with a 3' CCACCA end + 3 diphosphate. Catalyzes the addition and repair of the essential 3'-terminal CCA sequence in tRNAs without using a nucleic acid template. Adds these three nucleotides in the order of C, C, and A to the tRNA nucleotide-73, using CTP and ATP as substrates and producing inorganic pyrophosphate. tRNA 3'-terminal CCA addition is required both for tRNA processing and repair. Also involved in tRNA surveillance by mediating tandem CCA addition to generate a CCACCA at the 3' terminus of unstable tRNAs. While stable tRNAs receive only 3'-terminal CCA, unstable tRNAs are marked with CCACCA and rapidly degraded. This is Multifunctional CCA protein from Pseudomonas aeruginosa (strain LESB58).